The sequence spans 123 residues: Holo-[acyl-carrier-protein] synthase (123 aa).

Mg(2+) is bound by residues Asp8 and Glu60.

It belongs to the P-Pant transferase superfamily. AcpS family. Mg(2+) serves as cofactor.

The protein resides in the cytoplasm. It carries out the reaction apo-[ACP] + CoA = holo-[ACP] + adenosine 3',5'-bisphosphate + H(+). Transfers the 4'-phosphopantetheine moiety from coenzyme A to a Ser of acyl-carrier-protein. The chain is Holo-[acyl-carrier-protein] synthase from Ehrlichia ruminantium (strain Gardel).